The primary structure comprises 297 residues: NADH-ubiquinone oxidoreductase chain 1 (297 aa).

The next 9 helical transmembrane spans lie at 1-21 (MKSL…TLAE), 34-54 (PNHV…KLIL), 66-86 (WLFV…WLVI), 99-119 (LSIL…IYTG), 139-159 (VSYE…GATL), 170-190 (GTVL…AALA), 206-228 (LVAG…GEYA), 235-257 (TVLN…IWIR), and 277-297 (LPFL…LDLF).

The protein belongs to the complex I subunit 1 family.

It localises to the mitochondrion inner membrane. The catalysed reaction is a ubiquinone + NADH + 5 H(+)(in) = a ubiquinol + NAD(+) + 4 H(+)(out). In terms of biological role, core subunit of the mitochondrial membrane respiratory chain NADH dehydrogenase (Complex I) that is believed to belong to the minimal assembly required for catalysis. Complex I functions in the transfer of electrons from NADH to the respiratory chain. The immediate electron acceptor for the enzyme is believed to be ubiquinone. The chain is NADH-ubiquinone oxidoreductase chain 1 from Hyaloraphidium curvatum (Lower fungus).